The sequence spans 255 residues: tRNA pseudouridine synthase A (255 aa).

Asp-52 serves as the catalytic Nucleophile. Residue Tyr-111 coordinates substrate.

The protein belongs to the tRNA pseudouridine synthase TruA family. Homodimer.

It carries out the reaction uridine(38/39/40) in tRNA = pseudouridine(38/39/40) in tRNA. In terms of biological role, formation of pseudouridine at positions 38, 39 and 40 in the anticodon stem and loop of transfer RNAs. This Cereibacter sphaeroides (strain ATCC 17023 / DSM 158 / JCM 6121 / CCUG 31486 / LMG 2827 / NBRC 12203 / NCIMB 8253 / ATH 2.4.1.) (Rhodobacter sphaeroides) protein is tRNA pseudouridine synthase A.